The primary structure comprises 211 residues: Nucleoside triphosphate pyrophosphatase (211 aa).

Residue Asp-75 is the Proton acceptor of the active site.

This sequence belongs to the Maf family. It depends on a divalent metal cation as a cofactor.

Its subcellular location is the cytoplasm. The catalysed reaction is a ribonucleoside 5'-triphosphate + H2O = a ribonucleoside 5'-phosphate + diphosphate + H(+). The enzyme catalyses a 2'-deoxyribonucleoside 5'-triphosphate + H2O = a 2'-deoxyribonucleoside 5'-phosphate + diphosphate + H(+). Nucleoside triphosphate pyrophosphatase. May have a dual role in cell division arrest and in preventing the incorporation of modified nucleotides into cellular nucleic acids. The polypeptide is Nucleoside triphosphate pyrophosphatase (Prochlorococcus marinus (strain NATL2A)).